A 333-amino-acid chain; its full sequence is Structure-specific endonuclease subunit SLX1 homolog (333 aa).

The region spanning 68–157 (DFFGVYCLLS…KSRRLRLLNL (90 aa)) is the GIY-YIG domain. Residues 237 to 293 (CSLCLKPILSISELLRCHANETCKSHFHMRCLSKHALNAVDEYRTSLFPIQGQCPKC) form an SLX1-type zinc finger.

The protein belongs to the SLX1 family. As to quaternary structure, forms a heterodimer with a member of the SLX4 family. A divalent metal cation is required as a cofactor.

It localises to the nucleus. Functionally, catalytic subunit of a heterodimeric structure-specific endonuclease that resolves DNA secondary structures generated during DNA repair and recombination. Has endonuclease activity towards branched DNA substrates, introducing single-strand cuts in duplex DNA close to junctions with ss-DNA. The polypeptide is Structure-specific endonuclease subunit SLX1 homolog (Brugia malayi (Filarial nematode worm)).